The chain runs to 236 residues: Phosphoribosylaminoimidazole-succinocarboxamide synthase (236 aa).

The protein belongs to the SAICAR synthetase family.

The enzyme catalyses 5-amino-1-(5-phospho-D-ribosyl)imidazole-4-carboxylate + L-aspartate + ATP = (2S)-2-[5-amino-1-(5-phospho-beta-D-ribosyl)imidazole-4-carboxamido]succinate + ADP + phosphate + 2 H(+). It participates in purine metabolism; IMP biosynthesis via de novo pathway; 5-amino-1-(5-phospho-D-ribosyl)imidazole-4-carboxamide from 5-amino-1-(5-phospho-D-ribosyl)imidazole-4-carboxylate: step 1/2. This chain is Phosphoribosylaminoimidazole-succinocarboxamide synthase, found in Chlorobium phaeobacteroides (strain BS1).